The following is a 95-amino-acid chain: Aspartyl/glutamyl-tRNA(Asn/Gln) amidotransferase subunit C (95 aa).

It belongs to the GatC family. In terms of assembly, heterotrimer of A, B and C subunits.

It catalyses the reaction L-glutamyl-tRNA(Gln) + L-glutamine + ATP + H2O = L-glutaminyl-tRNA(Gln) + L-glutamate + ADP + phosphate + H(+). It carries out the reaction L-aspartyl-tRNA(Asn) + L-glutamine + ATP + H2O = L-asparaginyl-tRNA(Asn) + L-glutamate + ADP + phosphate + 2 H(+). Functionally, allows the formation of correctly charged Asn-tRNA(Asn) or Gln-tRNA(Gln) through the transamidation of misacylated Asp-tRNA(Asn) or Glu-tRNA(Gln) in organisms which lack either or both of asparaginyl-tRNA or glutaminyl-tRNA synthetases. The reaction takes place in the presence of glutamine and ATP through an activated phospho-Asp-tRNA(Asn) or phospho-Glu-tRNA(Gln). The sequence is that of Aspartyl/glutamyl-tRNA(Asn/Gln) amidotransferase subunit C from Prosthecochloris aestuarii (strain DSM 271 / SK 413).